A 550-amino-acid chain; its full sequence is DNA-directed RNA polymerase subunit alpha (550 aa).

Residues 1–333 form an alpha N-terminal domain (alpha-NTD) region; the sequence is MTIYPNLKKI…QENNLFRSEK (333 aa). The segment at 185–258 is insert; that stretch reads TTLKKRNILL…TSLGHDTVSN (74 aa). Residues 378-550 are alpha C-terminal domain (alpha-CTD); the sequence is FLNQSLGQNK…SLTFEYARKF (173 aa).

This sequence belongs to the RNA polymerase alpha chain family. In plastids the minimal PEP RNA polymerase catalytic core is composed of four subunits: alpha, beta, beta', and beta''. When a (nuclear-encoded) sigma factor is associated with the core the holoenzyme is formed, which can initiate transcription.

The protein resides in the plastid. Its subcellular location is the chloroplast. The catalysed reaction is RNA(n) + a ribonucleoside 5'-triphosphate = RNA(n+1) + diphosphate. Functionally, DNA-dependent RNA polymerase catalyzes the transcription of DNA into RNA using the four ribonucleoside triphosphates as substrates. The sequence is that of DNA-directed RNA polymerase subunit alpha (rpoA) from Chlamydomonas reinhardtii (Chlamydomonas smithii).